We begin with the raw amino-acid sequence, 490 residues long: ATP synthase subunit beta, plastid (490 aa).

170–177 (GGAGVGKT) contacts ATP.

Belongs to the ATPase alpha/beta chains family. In terms of assembly, F-type ATPases have 2 components, CF(1) - the catalytic core - and CF(0) - the membrane proton channel. CF(1) has five subunits: alpha(3), beta(3), gamma(1), delta(1), epsilon(1). CF(0) has four main subunits: a(1), b(1), b'(1) and c(9-12).

It localises to the plastid membrane. It catalyses the reaction ATP + H2O + 4 H(+)(in) = ADP + phosphate + 5 H(+)(out). In terms of biological role, produces ATP from ADP in the presence of a proton gradient across the membrane. The catalytic sites are hosted primarily by the beta subunits. The chain is ATP synthase subunit beta, plastid (atpB) from Cuscuta japonica (Japanese dodder).